Consider the following 225-residue polypeptide: Protein GrpE (225 aa).

Disordered stretches follow at residues 1–44 (MTEE…ENAG) and 183–225 (VAVA…PDEG).

This sequence belongs to the GrpE family. Homodimer.

Its subcellular location is the cytoplasm. Participates actively in the response to hyperosmotic and heat shock by preventing the aggregation of stress-denatured proteins, in association with DnaK and GrpE. It is the nucleotide exchange factor for DnaK and may function as a thermosensor. Unfolded proteins bind initially to DnaJ; upon interaction with the DnaJ-bound protein, DnaK hydrolyzes its bound ATP, resulting in the formation of a stable complex. GrpE releases ADP from DnaK; ATP binding to DnaK triggers the release of the substrate protein, thus completing the reaction cycle. Several rounds of ATP-dependent interactions between DnaJ, DnaK and GrpE are required for fully efficient folding. The protein is Protein GrpE of Streptomyces coelicolor (strain ATCC BAA-471 / A3(2) / M145).